Here is a 489-residue protein sequence, read N- to C-terminus: 3-octaprenyl-4-hydroxybenzoate carboxy-lyase (489 aa).

Mn(2+) is bound at residue N172. Residues I175–R177, R189–L191, and R194–G195 each bind prenylated FMN. E238 is a binding site for Mn(2+). D287 serves as the catalytic Proton donor.

This sequence belongs to the UbiD family. In terms of assembly, homohexamer. It depends on prenylated FMN as a cofactor. The cofactor is Mn(2+).

It is found in the cell membrane. The enzyme catalyses a 4-hydroxy-3-(all-trans-polyprenyl)benzoate + H(+) = a 2-(all-trans-polyprenyl)phenol + CO2. It functions in the pathway cofactor biosynthesis; ubiquinone biosynthesis. Its function is as follows. Catalyzes the decarboxylation of 3-octaprenyl-4-hydroxy benzoate to 2-octaprenylphenol, an intermediate step in ubiquinone biosynthesis. This chain is 3-octaprenyl-4-hydroxybenzoate carboxy-lyase, found in Salmonella paratyphi B (strain ATCC BAA-1250 / SPB7).